The chain runs to 620 residues: Estrogen receptor (620 aa).

Composition is skewed to polar residues over residues 1 to 10 (MSKRQSSVQI) and 101 to 111 (GSLQSLGSGPT). Disordered regions lie at residues 1 to 55 (MSKR…RGSG) and 88 to 111 (YSAP…SGPT). Residues 1 to 185 (MSKRQSSVQI…GFEMAKDTRF (185 aa)) are modulating. 2 NR C4-type zinc fingers span residues 186 to 206 (CAVC…CEGC) and 222 to 246 (CPAT…LRKC). A DNA-binding region (nuclear receptor) is located at residues 186–251 (CAVCSDYASG…RLRKCYEVGM (66 aa)). The hinge stretch occupies residues 252-314 (MKGGVRKDRI…GGGRLSVTSI (63 aa)). Positions 286-308 (KTVHYDGRKRSSTGGGGGGGGGR) are disordered. Gly residues predominate over residues 298–308 (TGGGGGGGGGR). In terms of domain architecture, NR LBD spans 315 to 551 (PPEQVLLLLQ…DLLLEMLDAH (237 aa)). A disordered region spans residues 558 to 620 (RAPQSLSQVD…RPDCTPALQD (63 aa)).

It belongs to the nuclear hormone receptor family. NR3 subfamily. As to quaternary structure, binds DNA as a homodimer. Can form a heterodimer with ER-beta. In terms of tissue distribution, widely expressed in brain, ovary, testis, and female liver.

The protein resides in the nucleus. Its function is as follows. The steroid hormones and their receptors are involved in the regulation of eukaryotic gene expression and affect cellular proliferation and differentiation in target tissues. This chain is Estrogen receptor (esr1), found in Oryzias latipes (Japanese rice fish).